A 923-amino-acid chain; its full sequence is Protein prickle (923 aa).

The tract at residues 1–196 (MSYPYQKSHH…HPFHSPASAA (196 aa)) is disordered. Residues 11 to 34 (QTQQPQQNGHPQHQLMLQQQQQAD) show a composition bias toward low complexity. The span at 37 to 49 (PHHHHHHHVHHAT) shows a compositional bias: basic residues. Low complexity-rich tracts occupy residues 59 to 73 (RSPL…LYSG) and 106 to 118 (MPGM…PPGM). Gly residues predominate over residues 122-134 (LGGGGGGGGGGSA). Low complexity-rich tracts occupy residues 152–169 (STVT…SARS) and 184–196 (SSHH…ASAA). The PET domain maps to 275-383 (GGGHNYSQSD…TVKQITTTLI (109 aa)). LIM zinc-binding domains lie at 382 to 446 (LICE…ETLK), 447 to 507 (PRCS…MFAE), and 508 to 570 (YCDY…GEPP). Disordered regions lie at residues 571–668 (TPSD…LDLT) and 703–867 (GPIA…SSAD). Residues 709 to 718 (NGNGPTGGGP) show a composition bias toward gly residues. Positions 738–748 (ESPSFSGTNSP) are enriched in polar residues. Residues 777-786 (HSIKEVRFEG) are compositionally biased toward basic and acidic residues. The segment covering 792–805 (LPRTKSYCQRNGGQ) has biased composition (polar residues). Acidic residues predominate over residues 817–827 (SDDDELAEDET). The span at 840-852 (QREQQRPVDDSDA) shows a compositional bias: basic and acidic residues. Over residues 853–865 (RSVCSTCSSSSSS) the composition is skewed to low complexity.

The protein belongs to the prickle / espinas / testin family. In terms of assembly, interacts with dsh; PET and LIM domains interact with dsh DEP domain, in wing cells. Interacts with Vang in photoreceptor cells.

The protein localises to the cell membrane. Acts in a planar cell polarity (PCP) complex; polarization along the apical/basal axis of epithelial cells. PCP signaling in the wing disk requires the receptor fz and the cytoplasmic proteins dsh and pk. These act in a feedback loop leading to activation of the jnk cascade and subsequent polarized arrangement of hairs and bristles. Dgo and pk compete with one another for dsh binding, thereby modulating fz dsh activity and ensuring tight control over fz PCP signaling. Vang, stan and pk function together to regulate the establishment of tissue polarity in the adult eye. This is Protein prickle from Anopheles gambiae (African malaria mosquito).